Here is a 306-residue protein sequence, read N- to C-terminus: UDP-N-acetylenolpyruvoylglucosamine reductase (306 aa).

One can recognise an FAD-binding PCMH-type domain in the interval 34–198; sequence VGGPADLLIT…LEVTFKLHNS (165 aa). The active site involves arginine 177. Residue serine 227 is the Proton donor of the active site. Glutamate 297 is an active-site residue.

The protein belongs to the MurB family. The cofactor is FAD.

Its subcellular location is the cytoplasm. It catalyses the reaction UDP-N-acetyl-alpha-D-muramate + NADP(+) = UDP-N-acetyl-3-O-(1-carboxyvinyl)-alpha-D-glucosamine + NADPH + H(+). It participates in cell wall biogenesis; peptidoglycan biosynthesis. In terms of biological role, cell wall formation. This chain is UDP-N-acetylenolpyruvoylglucosamine reductase, found in Clostridium botulinum (strain Langeland / NCTC 10281 / Type F).